Consider the following 284-residue polypeptide: 2-dehydro-3-deoxyphosphooctonate aldolase (284 aa).

This sequence belongs to the KdsA family.

Its subcellular location is the cytoplasm. The enzyme catalyses D-arabinose 5-phosphate + phosphoenolpyruvate + H2O = 3-deoxy-alpha-D-manno-2-octulosonate-8-phosphate + phosphate. It functions in the pathway carbohydrate biosynthesis; 3-deoxy-D-manno-octulosonate biosynthesis; 3-deoxy-D-manno-octulosonate from D-ribulose 5-phosphate: step 2/3. Its pathway is bacterial outer membrane biogenesis; lipopolysaccharide biosynthesis. The chain is 2-dehydro-3-deoxyphosphooctonate aldolase from Histophilus somni (strain 2336) (Haemophilus somnus).